Consider the following 54-residue polypeptide: Sec-independent protein translocase protein TatA (54 aa).

A helical membrane pass occupies residues 1–21 (MGMSFSHLLIVLLIIFVLFGA).

The protein belongs to the TatA/E family. The Tat system comprises two distinct complexes: a TatABC complex, containing multiple copies of TatA, TatB and TatC subunits, and a separate TatA complex, containing only TatA subunits. Substrates initially bind to the TatABC complex, which probably triggers association of the separate TatA complex to form the active translocon.

It localises to the cell inner membrane. In terms of biological role, part of the twin-arginine translocation (Tat) system that transports large folded proteins containing a characteristic twin-arginine motif in their signal peptide across membranes. TatA could form the protein-conducting channel of the Tat system. The sequence is that of Sec-independent protein translocase protein TatA from Rickettsia canadensis (strain McKiel).